The primary structure comprises 219 residues: Poxin (219 aa).

Histidine 17 functions as the Proton donor in the catalytic mechanism. Residue tyrosine 138 is the Shared with catalytic histidine of dimeric partner of the active site. The Proton acceptor; shared with catalytic histidine of dimeric partner role is filled by lysine 142.

Belongs to the poxin family. In terms of assembly, homodimer.

The enzyme catalyses 2',3'-cGAMP + H2O = Gp(2'-5')Ap(3') + H(+). Its function is as follows. Nuclease that is responsible for viral evasion of host cGAS-STING innate immunity. Cleaves 2',3'-cGAMP which is produced by host cGAS following recognition of cytosolic DNA and blocks the subsequent 2',3'-cGAMP-mediated activation of TMEM173/STING, which normally spreads to adjacent cells and activates the interferon and NF-kappa-B immune responses. In Bos taurus (Bovine), this protein is Poxin (OPG188).